The following is a 414-amino-acid chain: Arrestin domain-containing protein 3 (414 aa).

2 short sequence motifs (PPxY motif) span residues 346-349 (PPSY) and 391-394 (PPLY). Positions 393–414 (LYSEIDPNPDQPADDRPSCPSR) are disordered. The span at 405 to 414 (ADDRPSCPSR) shows a compositional bias: basic and acidic residues.

This sequence belongs to the arrestin family. In terms of assembly, interacts (via PPxY motifs) with NEDD4 (via WW domains). Interacts with ADRB2. Interacts with ADRB3. Interacts with HGS (via PPxY motifs). Does not bind TXN (thioredoxin). Interacts with ITCH.

Its subcellular location is the cytoplasm. It localises to the cell membrane. It is found in the lysosome. The protein resides in the endosome. The protein localises to the early endosome. Adapter protein that plays a role in regulating cell-surface expression of adrenergic receptors and probably also other G protein-coupled receptors. Plays a role in NEDD4-mediated ubiquitination and endocytosis af activated ADRB2 and subsequent ADRB2 degradation. May recruit NEDD4 to ADRB2. Alternatively, may function as adapter protein that does not play a major role in recruiting NEDD4 to ADRB2, but rather plays a role in a targeting ADRB2 to endosomes. This chain is Arrestin domain-containing protein 3 (ARRDC3), found in Bos taurus (Bovine).